A 192-amino-acid polypeptide reads, in one-letter code: Peptidyl-tRNA hydrolase (192 aa).

Tyr14 contributes to the tRNA binding site. His19 acts as the Proton acceptor in catalysis. TRNA is bound by residues Tyr64, Asn66, and Asn112.

Belongs to the PTH family. In terms of assembly, monomer.

The protein resides in the cytoplasm. The catalysed reaction is an N-acyl-L-alpha-aminoacyl-tRNA + H2O = an N-acyl-L-amino acid + a tRNA + H(+). Functionally, hydrolyzes ribosome-free peptidyl-tRNAs (with 1 or more amino acids incorporated), which drop off the ribosome during protein synthesis, or as a result of ribosome stalling. Its function is as follows. Catalyzes the release of premature peptidyl moieties from peptidyl-tRNA molecules trapped in stalled 50S ribosomal subunits, and thus maintains levels of free tRNAs and 50S ribosomes. In Prosthecochloris aestuarii (strain DSM 271 / SK 413), this protein is Peptidyl-tRNA hydrolase.